Reading from the N-terminus, the 718-residue chain is Putative methyltransferase NSUN7 (718 aa).

Cysteine 439 serves as the catalytic Nucleophile. 3 disordered regions span residues 536–557 (GKSS…KGAT), 578–616 (ANLS…PAVP), and 694–718 (SLSR…RRWL). A compositionally biased stretch (basic residues) spans 538–549 (SSKREKKKKKSK). Residues 591-604 (QKNTAQVGASSQTR) are compositionally biased toward polar residues. Basic and acidic residues predominate over residues 696 to 706 (SRKEEKPKDDT).

This sequence belongs to the class I-like SAM-binding methyltransferase superfamily. RsmB/NOP family.

Functionally, may have S-adenosyl-L-methionine-dependent methyl-transferase activity. The polypeptide is Putative methyltransferase NSUN7 (NSUN7) (Homo sapiens (Human)).